A 190-amino-acid chain; its full sequence is MGGCCSSSRKSHLVGTPVYYYCPESFEELVPSGTRAGVGSAFTTGLLVDIGLETSIPDTFCAPAPLPYDLLLGRPQCTDSESIKGRMSGSSFETLATCEDLGESDCKTLASSVILSPRKSDFSKHQGLKILVDEEEDCCPICFEDYDVENPRLTTKCEHEFHLSCLLEWIERSDRCPICDKEVVFDDRLN.

The RING-type; atypical zinc-finger motif lies at 139–180; sequence CPICFEDYDVENPRLTTKCEHEFHLSCLLEWIERSDRCPICD.

It catalyses the reaction S-ubiquitinyl-[E2 ubiquitin-conjugating enzyme]-L-cysteine + [acceptor protein]-L-lysine = [E2 ubiquitin-conjugating enzyme]-L-cysteine + N(6)-ubiquitinyl-[acceptor protein]-L-lysine.. It participates in protein modification; protein ubiquitination. Its function is as follows. Probable E3 ubiquitin-protein ligase that may possess E3 ubiquitin ligase activity in vitro. The sequence is that of Probable E3 ubiquitin-protein ligase RHB1A from Arabidopsis thaliana (Mouse-ear cress).